We begin with the raw amino-acid sequence, 997 residues long: Synaptonemal complex protein 1 (997 aa).

Positions 102-112 match the Mediates head to head self-assembly of N-terminal ends motif; that stretch reads PMSRLYSKLYK. Positions 118 to 121 match the Nuclear localization signal motif; the sequence is KKWK. 2 coiled-coil regions span residues 121-176 and 212-696; these read KVSI…LIKE and YVDL…KKIS. An interaction with SYCE3 region spans residues 207-363; sequence ETRQVYVDLN…YQLTEEKEAQ (157 aa). The segment at 698-792 is required for pH-induced assembly of C-terminal ends into antiparallel tetramers; that stretch reads EKLLGEVEKA…VSLKKQLEVE (95 aa). A Nuclear localization signal motif is present at residues 701–704; sequence LGEV. Positions 768–806 form a coiled coil; that stretch reads KVALETELSNIRNELVSLKKQLEVEKEEKEKLKMEQENT. The segment at 805–997 is DNA-binding; the sequence is NTAILTDKKD…RLKEAEKLFT (193 aa). At Ser824 the chain carries Phosphoserine. A disordered region spans residues 828 to 863; that stretch reads TSWKFDSKTTPSQNISRLSSSMDSGKSKDNRDSLRA. Residues 835–851 show a composition bias toward polar residues; it reads KTTPSQNISRLSSSMDS. Over residues 852 to 861 the composition is skewed to basic and acidic residues; sequence GKSKDNRDSL. Positions 902–905 match the Nuclear localization signal motif; that stretch reads KKRK. At Thr940 the chain carries Phosphothreonine.

As to quaternary structure, structural component of synaptonemal complexes. Homotetramer that consists of an N-terminal four-helical bundle that bifurcates into two elongated C-terminal dimeric coiled coils. This tetrameric building block potentially self-assembles into a supramolecular zipper-like lattice to mediate meiotic chromosome synapsis. Self-assembly is likely initiated by local proton density at chromosome axis, which is predicted to trigger antiparallel back to back assembly of adjacent C-terminal ends into tetrameric structures that anchor to chromosomal DNA. Then the N-terminal ends are predicted to undergo cooperative antiparallel head to head assembly at the midline of synaptonemal complexes central element to form a zipper-like lattice between properly aligned homologous chromosomes. The nascent synapsis generated by SYCP1 is stabilized through interaction with central element proteins SYCE1 and SYCE2. Interacts (via tetrameric core) with SYCE3; the interaction remodels SYCP1 homotetramers to 2:1 heterotrimers with SYCE3. SYCP1/SYCE3 heterotrimers form lattice assemblies as part of the mature synaptonemal complex via both lateral and head-to-head interactions. Forms a complex with EWSR1, PRDM9, SYCP3 and REC8; complex formation is dependent of phosphorylated form of REC8 and requires PRDM9 bound to hotspot DNA; EWSR1 joins PRDM9 with the chromosomal axis through REC8. Interacts with SPO16. As to expression, testis.

It is found in the nucleus. The protein resides in the chromosome. Its subcellular location is the centromere. Functionally, major component of the transverse filaments of synaptonemal complexes, formed between homologous chromosomes during meiotic prophase. Required for normal assembly of the central element of the synaptonemal complexes. Required for normal centromere pairing during meiosis. Required for normal meiotic chromosome synapsis during oocyte and spermatocyte development and for normal male and female fertility. This chain is Synaptonemal complex protein 1, found in Rattus norvegicus (Rat).